The primary structure comprises 61 residues: MAVPKKRTSMSKKRIRKNIWKKKTYFSIVHSYSLAKSRSFSSGNEHPKPKGFSGQQQQTNK.

The disordered stretch occupies residues 37-61 (SRSFSSGNEHPKPKGFSGQQQQTNK).

This sequence belongs to the bacterial ribosomal protein bL32 family.

The protein localises to the plastid. It localises to the chloroplast. This is Large ribosomal subunit protein bL32c from Agrostis stolonifera (Creeping bentgrass).